The chain runs to 424 residues: Gamma-glutamyl phosphate reductase (424 aa).

This sequence belongs to the gamma-glutamyl phosphate reductase family.

It localises to the cytoplasm. It catalyses the reaction L-glutamate 5-semialdehyde + phosphate + NADP(+) = L-glutamyl 5-phosphate + NADPH + H(+). It participates in amino-acid biosynthesis; L-proline biosynthesis; L-glutamate 5-semialdehyde from L-glutamate: step 2/2. Its function is as follows. Catalyzes the NADPH-dependent reduction of L-glutamate 5-phosphate into L-glutamate 5-semialdehyde and phosphate. The product spontaneously undergoes cyclization to form 1-pyrroline-5-carboxylate. The chain is Gamma-glutamyl phosphate reductase from Dehalococcoides mccartyi (strain CBDB1).